Here is a 290-residue protein sequence, read N- to C-terminus: Ribonuclease 3 (290 aa).

The RNase III domain occupies 20–145 (YSCFYRILGF…FIGAIYLDRG (126 aa)). Position 62 (E62) interacts with Mg(2+). D66 is a catalytic residue. Mg(2+) is bound by residues N131 and E134. E134 is a catalytic residue. The region spanning 173–242 (NFKSKLIEWS…AQMTLKKIKG (70 aa)) is the DRBM domain. A disordered region spans residues 254–290 (KTQNNVPAEDTTPESETSLTAENQQIDEIISTEEISV). Over residues 267-279 (ESETSLTAENQQI) the composition is skewed to polar residues.

The protein belongs to the ribonuclease III family. Homodimer. It depends on Mg(2+) as a cofactor.

It is found in the cytoplasm. The catalysed reaction is Endonucleolytic cleavage to 5'-phosphomonoester.. In terms of biological role, digests double-stranded RNA. Involved in the processing of primary rRNA transcript to yield the immediate precursors to the large and small rRNAs (23S and 16S). Processes some mRNAs, and tRNAs when they are encoded in the rRNA operon. Processes pre-crRNA and tracrRNA of type II CRISPR loci if present in the organism. The protein is Ribonuclease 3 of Bacteroides fragilis (strain ATCC 25285 / DSM 2151 / CCUG 4856 / JCM 11019 / LMG 10263 / NCTC 9343 / Onslow / VPI 2553 / EN-2).